The following is a 73-amino-acid chain: SIFamide-related peptide (73 aa).

A signal peptide spans 1 to 23; that stretch reads MVSIRLTFALAIVAIIFAFSVDA. The residue at position 35 (Phe35) is a Phenylalanine amide. A propeptide spanning residues 39–73 is cleaved from the precursor; sequence SNTMTDYEFTSRALSAICEVASETCTAWMSRQESN.

In terms of tissue distribution, expressed in brain, the retrocerebral complex and in ventral, thoracic and abdominal ganglia (at protein level).

It is found in the secreted. The sequence is that of SIFamide-related peptide from Camponotus floridanus (Florida carpenter ant).